The primary structure comprises 341 residues: Adenine deaminase (341 aa).

3 residues coordinate Zn(2+): His-17, His-19, and His-197. The active-site Proton donor is Glu-200. Position 278 (Asp-278) interacts with Zn(2+). Asp-279 provides a ligand contact to substrate.

Belongs to the metallo-dependent hydrolases superfamily. Adenosine and AMP deaminases family. Adenine deaminase type 2 subfamily. The cofactor is Zn(2+).

The catalysed reaction is adenine + H2O + H(+) = hypoxanthine + NH4(+). In terms of biological role, catalyzes the hydrolytic deamination of adenine to hypoxanthine. Plays an important role in the purine salvage pathway and in nitrogen catabolism. This chain is Adenine deaminase, found in Chlorobium luteolum (strain DSM 273 / BCRC 81028 / 2530) (Pelodictyon luteolum).